Consider the following 246-residue polypeptide: UDP-N-acetyl-D-mannosaminuronic acid transferase (246 aa).

The protein belongs to the glycosyltransferase 26 family.

It catalyses the reaction UDP-N-acetyl-alpha-D-mannosaminouronate + N-acetyl-alpha-D-glucosaminyl-di-trans,octa-cis-undecaprenyl diphosphate = beta-D-ManNAcA-(1-&gt;4)-alpha-D-GlcNAc-di-trans,octa-cis-undecaprenyl diphosphate + UDP + H(+). Its pathway is bacterial outer membrane biogenesis; enterobacterial common antigen biosynthesis. Catalyzes the synthesis of Und-PP-GlcNAc-ManNAcA (Lipid II), the second lipid-linked intermediate involved in enterobacterial common antigen (ECA) synthesis. This chain is UDP-N-acetyl-D-mannosaminuronic acid transferase, found in Escherichia coli O1:K1 / APEC.